Reading from the N-terminus, the 366-residue chain is Phosphoserine aminotransferase (366 aa).

Arginine 42 lines the L-glutamate pocket. Residues 76 to 77 (AT), tryptophan 101, threonine 156, aspartate 178, and glutamine 201 contribute to the pyridoxal 5'-phosphate site. Position 202 is an N6-(pyridoxal phosphate)lysine (lysine 202). A pyridoxal 5'-phosphate-binding site is contributed by 243 to 244 (NT).

This sequence belongs to the class-V pyridoxal-phosphate-dependent aminotransferase family. SerC subfamily. In terms of assembly, homodimer. Pyridoxal 5'-phosphate serves as cofactor.

Its subcellular location is the cytoplasm. It carries out the reaction O-phospho-L-serine + 2-oxoglutarate = 3-phosphooxypyruvate + L-glutamate. The enzyme catalyses 4-(phosphooxy)-L-threonine + 2-oxoglutarate = (R)-3-hydroxy-2-oxo-4-phosphooxybutanoate + L-glutamate. The protein operates within amino-acid biosynthesis; L-serine biosynthesis; L-serine from 3-phospho-D-glycerate: step 2/3. Its pathway is cofactor biosynthesis; pyridoxine 5'-phosphate biosynthesis; pyridoxine 5'-phosphate from D-erythrose 4-phosphate: step 3/5. Catalyzes the reversible conversion of 3-phosphohydroxypyruvate to phosphoserine and of 3-hydroxy-2-oxo-4-phosphonooxybutanoate to phosphohydroxythreonine. In Aromatoleum aromaticum (strain DSM 19018 / LMG 30748 / EbN1) (Azoarcus sp. (strain EbN1)), this protein is Phosphoserine aminotransferase.